Reading from the N-terminus, the 221-residue chain is MNKEQRWKSFFEKEKAQKYFKDELWPFLENEYKNKIIFPKKEDIFKAFDLVDFNNLKVVIIGQDPYINENQAHGLAFSTLDFLLPKSLKNIFIELKNNYPNVVLKSGNLTSWASQGILLLNRVLSVEKGLSSSHYNRGWEIFTFNVIDYISKNFENIIFVLWGKKAQDLKKDINFKNHFILESSHPSPFSANISFFGSQIFLKINKILEQINKEKINWNIE.

D64 functions as the Proton acceptor in the catalytic mechanism.

The protein belongs to the uracil-DNA glycosylase (UDG) superfamily. UNG family.

The protein resides in the cytoplasm. It catalyses the reaction Hydrolyzes single-stranded DNA or mismatched double-stranded DNA and polynucleotides, releasing free uracil.. Excises uracil residues from the DNA which can arise as a result of misincorporation of dUMP residues by DNA polymerase or due to deamination of cytosine. This chain is Uracil-DNA glycosylase, found in Mycoplasmopsis pulmonis (strain UAB CTIP) (Mycoplasma pulmonis).